Reading from the N-terminus, the 116-residue chain is MTDQADATMPIKFTDAAAAKVKGLLEEEQNPALKLRVYVTGGGCSGFQYGFTFDEKVNEGDFTVEKQGVQLVVDPMSLQYLVGGEVDYTSGLEGSRFFVKNPNATTTCGCGASFSV.

Cysteine 44, cysteine 108, and cysteine 110 together coordinate iron-sulfur cluster.

This sequence belongs to the HesB/IscA family. Homodimer. Requires iron-sulfur cluster as cofactor.

In terms of biological role, required for insertion of 4Fe-4S clusters for at least IspG. This chain is Iron-sulfur cluster insertion protein ErpA, found in Shewanella oneidensis (strain ATCC 700550 / JCM 31522 / CIP 106686 / LMG 19005 / NCIMB 14063 / MR-1).